The chain runs to 212 residues: Protein GrpE (212 aa).

Residues 1 to 69 (MAEMSNNKTS…LESAKKEIES (69 aa)) form a disordered region. Low complexity predominate over residues 40–60 (ETTQTESMETAETETSLQTEL).

This sequence belongs to the GrpE family. As to quaternary structure, homodimer.

The protein resides in the cytoplasm. Its function is as follows. Participates actively in the response to hyperosmotic and heat shock by preventing the aggregation of stress-denatured proteins, in association with DnaK and GrpE. It is the nucleotide exchange factor for DnaK and may function as a thermosensor. Unfolded proteins bind initially to DnaJ; upon interaction with the DnaJ-bound protein, DnaK hydrolyzes its bound ATP, resulting in the formation of a stable complex. GrpE releases ADP from DnaK; ATP binding to DnaK triggers the release of the substrate protein, thus completing the reaction cycle. Several rounds of ATP-dependent interactions between DnaJ, DnaK and GrpE are required for fully efficient folding. This chain is Protein GrpE, found in Leptospira interrogans serogroup Icterohaemorrhagiae serovar Lai (strain 56601).